The primary structure comprises 465 residues: Transposase for insertion sequence IS1202 (465 aa).

Residues 157-340 enclose the Integrase catalytic domain; it reads HPSRPRKKFA…APNPSERNLI (184 aa).

Required for the transposition of the insertion element. This Streptococcus pneumoniae protein is Transposase for insertion sequence IS1202.